The chain runs to 310 residues: Transcription initiation factor TFIID subunit 8 (310 aa).

A disordered region spans residues 1-30 (MADAAATAGAGGSGTRSGSKQSTNPADNYH). An N-acetylalanine modification is found at Ala2. Residues 35–102 (RTLQVVVSSL…IVVTLVEMGF (68 aa)) enclose the Histone-fold; involved in forming hexamer structure in TFIID complex domain. Phosphothreonine is present on Thr130. The tract at residues 262–310 (DSGAEKENTSVLQQNPSLSGSRNGEENIIDNPYLRPVKKPKIRRKKSLS) is disordered. Polar residues predominate over residues 270 to 283 (TSVLQQNPSLSGSR). Ser271 carries the post-translational modification Phosphoserine. The short motif at 294-307 (YLRPVKKPKIRRKK) is the Nuclear localization signal element. Positions 297–310 (PVKKPKIRRKKSLS) are enriched in basic residues.

It belongs to the TAF8 family. Component of the TFIID basal transcription factor complex, composed of TATA-box-binding protein TBP, and a number of TBP-associated factors (TAFs), including TAF1, TAF2, TAF3, TAF4, TAF5, TAF6, TAF7, TAF8, TAF9, TAF10, TAF11, TAF12 and TAF13. Interacts with TBP, TAF1, TAF6, TAF10, TAF11 and TAF13. Component also of a small TAF complex (SMAT) containing TAF8, TAF10 and SUPT7L. Forms a heterodimer with TAF10. Interaction with TAF10 is mediated mainly via its histone fold domain while interaction with SUPT7L is via its C-terminal region.

The protein localises to the nucleus. It is found in the cytoplasm. Its function is as follows. The TFIID basal transcription factor complex plays a major role in the initiation of RNA polymerase II (Pol II)-dependent transcription. TFIID recognizes and binds promoters with or without a TATA box via its subunit TBP, a TATA-box-binding protein, and promotes assembly of the pre-initiation complex (PIC). The TFIID complex consists of TBP and TBP-associated factors (TAFs), including TAF1, TAF2, TAF3, TAF4, TAF5, TAF6, TAF7, TAF8, TAF9, TAF10, TAF11, TAF12 and TAF13. The TFIID complex structure can be divided into 3 modules TFIID-A, TFIID-B, and TFIID-C. TAF8 is involved in forming the TFIID-B module, together with TAF5. Mediates both basal and activator-dependent transcription. Plays a role in the differentiation of preadipocyte fibroblasts to adipocytes, however, does not seem to play a role in differentiation of myoblasts. Required for the integration of TAF10 in the TAF complex. May be important for survival of cells of the inner cell mass which constitute the pluripotent cell population of the early embryo. This Homo sapiens (Human) protein is Transcription initiation factor TFIID subunit 8 (TAF8).